Consider the following 308-residue polypeptide: Glutaminase (308 aa).

Residues Ser-68, Asn-118, Glu-162, Asn-169, Tyr-193, Tyr-244, and Val-262 each coordinate substrate.

The protein belongs to the glutaminase family. In terms of assembly, homotetramer.

It catalyses the reaction L-glutamine + H2O = L-glutamate + NH4(+). The sequence is that of Glutaminase from Hahella chejuensis (strain KCTC 2396).